A 307-amino-acid chain; its full sequence is tRNA dimethylallyltransferase (307 aa).

5 to 12 (GPTGTGKS) is a binding site for ATP. Residue 7–12 (TGTGKS) coordinates substrate.

This sequence belongs to the IPP transferase family. As to quaternary structure, monomer. Mg(2+) serves as cofactor.

It carries out the reaction adenosine(37) in tRNA + dimethylallyl diphosphate = N(6)-dimethylallyladenosine(37) in tRNA + diphosphate. Functionally, catalyzes the transfer of a dimethylallyl group onto the adenine at position 37 in tRNAs that read codons beginning with uridine, leading to the formation of N6-(dimethylallyl)adenosine (i(6)A). The chain is tRNA dimethylallyltransferase from Mycobacterium avium (strain 104).